The following is a 199-amino-acid chain: Imidazole glycerol phosphate synthase subunit HisH (199 aa).

A Glutamine amidotransferase type-1 domain is found at 3–199 (NITIIDTGCA…LKNFVEKVPF (197 aa)). C78 functions as the Nucleophile in the catalytic mechanism. Active-site residues include H178 and E180.

In terms of assembly, heterodimer of HisH and HisF.

It is found in the cytoplasm. The enzyme catalyses 5-[(5-phospho-1-deoxy-D-ribulos-1-ylimino)methylamino]-1-(5-phospho-beta-D-ribosyl)imidazole-4-carboxamide + L-glutamine = D-erythro-1-(imidazol-4-yl)glycerol 3-phosphate + 5-amino-1-(5-phospho-beta-D-ribosyl)imidazole-4-carboxamide + L-glutamate + H(+). The catalysed reaction is L-glutamine + H2O = L-glutamate + NH4(+). It participates in amino-acid biosynthesis; L-histidine biosynthesis; L-histidine from 5-phospho-alpha-D-ribose 1-diphosphate: step 5/9. IGPS catalyzes the conversion of PRFAR and glutamine to IGP, AICAR and glutamate. The HisH subunit catalyzes the hydrolysis of glutamine to glutamate and ammonia as part of the synthesis of IGP and AICAR. The resulting ammonia molecule is channeled to the active site of HisF. The chain is Imidazole glycerol phosphate synthase subunit HisH from Haemophilus influenzae (strain 86-028NP).